Consider the following 357-residue polypeptide: bZIP transcription factor 23 (357 aa).

A disordered region spans residues 166-185; sequence PPVPPAPTPTAAAVPPPPPP. The bZIP domain occupies 275 to 338; the sequence is VERRQRRMIK…KNEVLERMSR (64 aa). Residues 277 to 296 form a basic motif region; sequence RRQRRMIKNRESAARSRQRK. The tract at residues 303 to 317 is leucine-zipper; that stretch reads LEAEVAKLKELNDEL.

Belongs to the bZIP family. ABI5 subfamily. In terms of tissue distribution, highly expressed in leaves.

Its subcellular location is the nucleus. Its function is as follows. Transcriptional activator that mediates abscisic acid (ABA) signaling. Can regulate the expression of a wide spectrum of stress-related genes in response to abiotic stresses through an ABA-dependent regulation pathway. Confers ABA-dependent drought and salinity tolerance. Binds specifically to the ABA-responsive elements (ABRE) in the promoter of target genes to mediate stress-responsive ABA signaling. In Oryza sativa subsp. japonica (Rice), this protein is bZIP transcription factor 23.